The primary structure comprises 244 residues: Ribonuclease P protein component 3 (244 aa).

It belongs to the eukaryotic/archaeal RNase P protein component 3 family. As to quaternary structure, consists of a catalytic RNA component and at least 4-5 protein subunits.

It localises to the cytoplasm. The enzyme catalyses Endonucleolytic cleavage of RNA, removing 5'-extranucleotides from tRNA precursor.. Part of ribonuclease P, a protein complex that generates mature tRNA molecules by cleaving their 5'-ends. This Methanopyrus kandleri (strain AV19 / DSM 6324 / JCM 9639 / NBRC 100938) protein is Ribonuclease P protein component 3.